A 373-amino-acid chain; its full sequence is Probable G-protein coupled receptor 173 (373 aa).

Residues 1 to 26 lie on the Extracellular side of the membrane; sequence MANTTGEPEEVSGALSPPSAVAYVKL. A glycan (N-linked (GlcNAc...) asparagine) is linked at N3. A helical transmembrane segment spans residues 27–47; that stretch reads VLLGLIMCVSLAGNAILSLLV. Topologically, residues 48 to 59 are cytoplasmic; that stretch reads LKDRALHKAPYY. Residues 60-80 form a helical membrane-spanning segment; the sequence is FLLDLCLADGIRSAVCFPFVL. Residues 81-97 lie on the Extracellular side of the membrane; it reads ASVRHGSSWTFSALSCK. Residues C96 and C174 are joined by a disulfide bond. The chain crosses the membrane as a helical span at residues 98-118; the sequence is IVAFMAVLFCFHAAFMLFCIS. The Cytoplasmic segment spans residues 119–139; that stretch reads VTRYMAIAHHRFYAKRMTLWT. Residues 140-160 traverse the membrane as a helical segment; that stretch reads CAAVICMAWTLSVAMAFPPVF. The Extracellular portion of the chain corresponds to 161–188; the sequence is DVGTYKFIREEDQCIFEHRYFKANDTLG. The N-linked (GlcNAc...) asparagine glycan is linked to N184. A helical membrane pass occupies residues 189-209; it reads FMLMLAVLMAATHAVYGKLLL. The Cytoplasmic segment spans residues 210–287; sequence FEYRHRKMKP…VKGEKQLGRM (78 aa). Residues 288-308 traverse the membrane as a helical segment; that stretch reads FYAITLLFLLLWSPYIVACYW. Residues 309 to 322 lie on the Extracellular side of the membrane; sequence RVFVKACAVPHRYL. A helical membrane pass occupies residues 323–343; that stretch reads ATAVWMSFAQAAVNPIVCFLL. The Cytoplasmic segment spans residues 344-373; sequence NKDLKKCLRTHAPCWGTGGAPAPREPYCVM.

The protein belongs to the G-protein coupled receptor 1 family.

It is found in the cell membrane. In terms of biological role, is a receptor for the SMIM20 derived peptides Phoenixin-14 and Phoenixin-20. It mediates the Phoenixin-14 and Phoenixin-20 augmentation of gonadotropin-releasing hormone (GNRH) signaling in the hypothalamus and pituitary gland. In the ovary, it mediates the effects of Phoenixin-14 and Phoenixin-20 induced granulosa cell proliferation during follicular growth. This Bos taurus (Bovine) protein is Probable G-protein coupled receptor 173 (GPR173).